Reading from the N-terminus, the 764-residue chain is 5-methyltetrahydropteroyltriglutamate--homocysteine methyltransferase (764 aa).

5-methyltetrahydropteroyltri-L-glutamate contacts are provided by residues 19 to 22 and Lys113; that span reads RELK. Residues 435 to 437 and Glu488 contribute to the L-homocysteine site; that span reads IGS. L-methionine contacts are provided by residues 435-437 and Glu488; that span reads IGS. 5-methyltetrahydropteroyltri-L-glutamate-binding positions include 519-520 and Trp565; that span reads RC. Asp603 lines the L-homocysteine pocket. Asp603 is a binding site for L-methionine. Residue Glu609 coordinates 5-methyltetrahydropteroyltri-L-glutamate. Residues His645, Cys647, and Glu669 each coordinate Zn(2+). Catalysis depends on His698, which acts as the Proton donor. Cys730 lines the Zn(2+) pocket.

The protein belongs to the vitamin-B12 independent methionine synthase family. Requires Zn(2+) as cofactor.

The catalysed reaction is 5-methyltetrahydropteroyltri-L-glutamate + L-homocysteine = tetrahydropteroyltri-L-glutamate + L-methionine. The protein operates within amino-acid biosynthesis; L-methionine biosynthesis via de novo pathway; L-methionine from L-homocysteine (MetE route): step 1/1. Catalyzes the transfer of a methyl group from 5-methyltetrahydrofolate to homocysteine resulting in methionine formation. In Desulforamulus reducens (strain ATCC BAA-1160 / DSM 100696 / MI-1) (Desulfotomaculum reducens), this protein is 5-methyltetrahydropteroyltriglutamate--homocysteine methyltransferase.